A 169-amino-acid chain; its full sequence is Putative 3-methyladenine DNA glycosylase (169 aa).

The protein belongs to the DNA glycosylase MPG family.

This Wolbachia sp. subsp. Brugia malayi (strain TRS) protein is Putative 3-methyladenine DNA glycosylase.